Consider the following 500-residue polypeptide: UDP-N-acetylmuramoyl-L-alanyl-D-glutamate--2,6-diaminopimelate ligase (500 aa).

UDP-N-acetyl-alpha-D-muramoyl-L-alanyl-D-glutamate contacts are provided by residues leucine 26, serine 28, and 43-45 (HQV). An ATP-binding site is contributed by 123-129 (GTNGKTT). Residues asparagine 164, 165 to 166 (TT), serine 192, glutamine 198, and arginine 200 each bind UDP-N-acetyl-alpha-D-muramoyl-L-alanyl-D-glutamate. Position 232 is an N6-carboxylysine (lysine 232). Meso-2,6-diaminopimelate contacts are provided by residues arginine 399, 423–426 (DNPR), glycine 474, and glutamate 478. Residues 423–426 (DNPR) carry the Meso-diaminopimelate recognition motif motif.

The protein belongs to the MurCDEF family. MurE subfamily. Mg(2+) serves as cofactor. Carboxylation is probably crucial for Mg(2+) binding and, consequently, for the gamma-phosphate positioning of ATP.

It is found in the cytoplasm. The enzyme catalyses UDP-N-acetyl-alpha-D-muramoyl-L-alanyl-D-glutamate + meso-2,6-diaminopimelate + ATP = UDP-N-acetyl-alpha-D-muramoyl-L-alanyl-gamma-D-glutamyl-meso-2,6-diaminopimelate + ADP + phosphate + H(+). It participates in cell wall biogenesis; peptidoglycan biosynthesis. Its function is as follows. Catalyzes the addition of meso-diaminopimelic acid to the nucleotide precursor UDP-N-acetylmuramoyl-L-alanyl-D-glutamate (UMAG) in the biosynthesis of bacterial cell-wall peptidoglycan. The chain is UDP-N-acetylmuramoyl-L-alanyl-D-glutamate--2,6-diaminopimelate ligase from Actinobacillus pleuropneumoniae serotype 5b (strain L20).